The primary structure comprises 205 residues: UPF0301 protein AZC_0488 (205 aa).

The protein belongs to the UPF0301 (AlgH) family.

The sequence is that of UPF0301 protein AZC_0488 from Azorhizobium caulinodans (strain ATCC 43989 / DSM 5975 / JCM 20966 / LMG 6465 / NBRC 14845 / NCIMB 13405 / ORS 571).